We begin with the raw amino-acid sequence, 189 residues long: uncharacterized protein (189 aa).

The first 20 residues, 1-20 (MKFSTVGFLFSTILFKSAFA), serve as a signal peptide directing secretion. The EF-hand domain maps to 74–109 (KKNEVLVDVLKKCDPSGNRRITLDEFLAFRKNGGEL). Residues aspartate 87, serine 89, asparagine 91, arginine 93, and glutamate 98 each contribute to the Ca(2+) site.

The protein localises to the endoplasmic reticulum lumen. It is found in the golgi apparatus lumen. This is an uncharacterized protein from Schizosaccharomyces pombe (strain 972 / ATCC 24843) (Fission yeast).